A 252-amino-acid polypeptide reads, in one-letter code: MAHLGYWMLLLFVATWSDVGLCKKRPKPGGGWNTGGSRYPGQSSPGGNRYPPQGGGWGQPHGGGWGQPHGGGWGQPHGGGWGQPHGGGWGQGGTHNQWGKPSKPKTSMKHVAGAAAAGAVVGGLGGYMLGSAMSRPLIHFGNDYEDRYYRENMYRYPNQVYYRPVDQYSNQNSFVHDCVNITVKQHTVTTTTKGENFTETDIKIMERVVEQMCITQYQQESQAAYQRAAGVLLFSSPPVILLISFLIFLIVG.

Residues 1 to 28 (MAHLGYWMLLLFVATWSDVGLCKKRPKP) form the signal peptide. Residues 23–229 (KKRPKPGGGW…ESQAAYQRAA (207 aa)) form an interaction with GRB2, ERI3 and SYN1 region. Positions 26 to 109 (PKPGGGWNTG…KPSKPKTSMK (84 aa)) are disordered. Tandem repeats lie at residues 51–59 (PPQGGGWGQ), 60–67 (PHGGGWGQ), 68–75 (PHGGGWGQ), 76–83 (PHGGGWGQ), and 84–92 (PHGGGWGQG). The 5 X 8 AA tandem repeats of P-H-G-G-G-W-G-Q stretch occupies residues 51 to 92 (PPQGGGWGQPHGGGWGQPHGGGWGQPHGGGWGQPHGGGWGQG). Residues 53 to 93 (QGGGWGQPHGGGWGQPHGGGWGQPHGGGWGQPHGGGWGQGG) are compositionally biased toward gly residues. Cu(2+)-binding residues include His-61, Gly-62, Gly-63, His-69, Gly-70, Gly-71, His-77, Gly-78, Gly-79, His-85, Gly-86, and Gly-87. The cysteines at positions 178 and 213 are disulfide-linked. N-linked (GlcNAc...) asparagine glycosylation is found at Asn-180 and Asn-196. Ala-229 is lipidated: GPI-anchor amidated alanine. The propeptide at 230–252 (GVLLFSSPPVILLISFLIFLIVG) is removed in mature form.

The protein belongs to the prion family. Monomer and homodimer. Has a tendency to aggregate into amyloid fibrils containing a cross-beta spine, formed by a steric zipper of superposed beta-strands. Soluble oligomers may represent an intermediate stage on the path to fibril formation. Copper binding may promote oligomerization. Interacts with GRB2, APP, ERI3/PRNPIP and SYN1. Mislocalized cytosolically exposed PrP interacts with MGRN1; this interaction alters MGRN1 subcellular location and causes lysosomal enlargement. Interacts with KIAA1191.

The protein localises to the cell membrane. It is found in the golgi apparatus. Its function is as follows. Its primary physiological function is unclear. Has cytoprotective activity against internal or environmental stresses. May play a role in neuronal development and synaptic plasticity. May be required for neuronal myelin sheath maintenance. May play a role in iron uptake and iron homeostasis. Soluble oligomers are toxic to cultured neuroblastoma cells and induce apoptosis (in vitro). Association with GPC1 (via its heparan sulfate chains) targets PRNP to lipid rafts. Also provides Cu(2+) or Zn(2+) for the ascorbate-mediated GPC1 deaminase degradation of its heparan sulfate side chains. This chain is Major prion protein (PRNP), found in Oryctolagus cuniculus (Rabbit).